The primary structure comprises 91 residues: Cell division topological specificity factor (91 aa).

It belongs to the MinE family.

In terms of biological role, prevents the cell division inhibition by proteins MinC and MinD at internal division sites while permitting inhibition at polar sites. This ensures cell division at the proper site by restricting the formation of a division septum at the midpoint of the long axis of the cell. In Chloroflexus aurantiacus (strain ATCC 29366 / DSM 635 / J-10-fl), this protein is Cell division topological specificity factor.